The following is a 120-amino-acid chain: MFLLYEYDIFWAFLIISSVIPIFAFIISGVLAPISKGPEKLSSYESGIEPMGDAWLQFRICYYMFALVFVVFDVETVFLYPWAMSFDILGVSVFIEALIFVLILIVGSIYAWRKGALEWS.

The next 3 membrane-spanning stretches (helical) occupy residues 9 to 29 (IFWA…IISG), 60 to 80 (ICYY…VFLY), and 88 to 108 (ILGV…IVGS).

It belongs to the complex I subunit 3 family. In terms of assembly, NDH is composed of at least 16 different subunits, 5 of which are encoded in the nucleus.

The protein resides in the plastid. The protein localises to the chloroplast thylakoid membrane. It catalyses the reaction a plastoquinone + NADH + (n+1) H(+)(in) = a plastoquinol + NAD(+) + n H(+)(out). It carries out the reaction a plastoquinone + NADPH + (n+1) H(+)(in) = a plastoquinol + NADP(+) + n H(+)(out). NDH shuttles electrons from NAD(P)H:plastoquinone, via FMN and iron-sulfur (Fe-S) centers, to quinones in the photosynthetic chain and possibly in a chloroplast respiratory chain. The immediate electron acceptor for the enzyme in this species is believed to be plastoquinone. Couples the redox reaction to proton translocation, and thus conserves the redox energy in a proton gradient. The protein is NAD(P)H-quinone oxidoreductase subunit 3, chloroplastic of Morus indica (Mulberry).